The primary structure comprises 181 residues: ATP-dependent protease subunit HslV (181 aa).

Threonine 7 is a catalytic residue. Alanine 165, cysteine 168, and threonine 171 together coordinate Na(+).

The protein belongs to the peptidase T1B family. HslV subfamily. As to quaternary structure, a double ring-shaped homohexamer of HslV is capped on each side by a ring-shaped HslU homohexamer. The assembly of the HslU/HslV complex is dependent on binding of ATP.

The protein resides in the cytoplasm. The enzyme catalyses ATP-dependent cleavage of peptide bonds with broad specificity.. With respect to regulation, allosterically activated by HslU binding. Its function is as follows. Protease subunit of a proteasome-like degradation complex believed to be a general protein degrading machinery. The polypeptide is ATP-dependent protease subunit HslV (Lysinibacillus sphaericus (strain C3-41)).